The sequence spans 633 residues: Pentatricopeptide repeat-containing protein At3g24000, mitochondrial (633 aa).

Residues 1 to 63 (MALRFPPRLL…SYIPADRRFY (63 aa)) constitute a mitochondrion transit peptide. PPR repeat units follow at residues 94 to 124 (DIVM…MPQR), 125 to 159 (DFVT…GYSP), 160 to 194 (NEFT…GFDS), 195 to 225 (NVHV…LESR), 226 to 260 (NDVS…GFRP), 261 to 295 (SHFS…GEKL), 296 to 326 (VAFA…LAKR), 327 to 361 (DVVS…GIRP), 362 to 396 (NEIS…GIVP), and 397 to 431 (EAWH…PTAA). Residues 432-507 (IWKALLNACR…EPACSWVEIE (76 aa)) form a type E motif region. The segment at 508–538 (NAIHMFVANDERHPQREEIARKWEEVLAKIK) is type E(+) motif. The segment at 539 to 633 (ELGYVPDTSH…DGNCSCKDYW (95 aa)) is type DYW motif.

It belongs to the PPR family. PCMP-H subfamily.

The protein localises to the mitochondrion. This Arabidopsis thaliana (Mouse-ear cress) protein is Pentatricopeptide repeat-containing protein At3g24000, mitochondrial (PCMP-H87).